Reading from the N-terminus, the 319-residue chain is MDGVIKSIFTFILIVEFIIGNLGNSFIVLVNCIDWVKRRKISLVDQILIALAISRISLVWSIFGSWCVSVFFPALFATEKLLRMLTNIWTVTNHFSVWLATILGTFYFLKIANFSNSIFLYLKWRVKKVVLVLLLVTLGLLFLNILLINIHINASINGYRGNMTCSSASCNFIRFSRAIALTSTVFVLIPFTLSLATSLLLSFSLWKHHKKMQHTVKGYRDVSTKAHRGVMQTVITFLLLYAVFLLTFFISIWASVRLKENQIIILSEMMGLAYPSGHSCVLILGNKKLRQASLSVLWWLRYRFKHGEPSGHKEFRESS.

At 1 to 7 the chain is on the extracellular side; sequence MDGVIKS. The helical transmembrane segment at 8-28 threads the bilayer; sequence IFTFILIVEFIIGNLGNSFIV. The Cytoplasmic portion of the chain corresponds to 29 to 55; it reads LVNCIDWVKRRKISLVDQILIALAISR. A helical transmembrane segment spans residues 56–76; it reads ISLVWSIFGSWCVSVFFPALF. Over 77–87 the chain is Extracellular; sequence ATEKLLRMLTN. Positions 86 and 89 each coordinate cholesterol. A helical membrane pass occupies residues 88–108; it reads IWTVTNHFSVWLATILGTFYF. The Cytoplasmic portion of the chain corresponds to 109 to 129; the sequence is LKIANFSNSIFLYLKWRVKKV. The helical transmembrane segment at 130 to 150 threads the bilayer; it reads VLVLLLVTLGLLFLNILLINI. Residues 151–184 lie on the Extracellular side of the membrane; the sequence is HINASINGYRGNMTCSSASCNFIRFSRAIALTST. Asn-153 and Asn-162 each carry an N-linked (GlcNAc...) asparagine glycan. Residue Ala-180 participates in cholesterol binding. Residues 185–205 traverse the membrane as a helical segment; it reads VFVLIPFTLSLATSLLLSFSL. Residues 206-233 lie on the Cytoplasmic side of the membrane; it reads WKHHKKMQHTVKGYRDVSTKAHRGVMQT. Residues 234-254 traverse the membrane as a helical segment; it reads VITFLLLYAVFLLTFFISIWA. At 255-263 the chain is on the extracellular side; it reads SVRLKENQI. The helical transmembrane segment at 264-284 threads the bilayer; it reads IILSEMMGLAYPSGHSCVLIL. Cholesterol is bound by residues Ser-267 and Met-270. The Cytoplasmic segment spans residues 285–319; the sequence is GNKKLRQASLSVLWWLRYRFKHGEPSGHKEFRESS.

This sequence belongs to the G-protein coupled receptor T2R family. As to quaternary structure, core component of the TAS2R14-GNAI1 complex, consisting of TAS2R14, GNAI1, GNB1 and GNG2; within the complex interacts with GNAI1. Core component of the TAS2R14-GNAT3 complex, consisting of TAS2R14, GNAT3, GNB1 and GNG2; within the complex interacts with GNAT3. Core component of the TAS2R14-GNAS2 complex, consisting of TAS2R14, GNAS2, GNB1 and GNG2; within the complex interacts with GNAS2.

The protein localises to the membrane. It carries out the reaction Ca(2+)(in) = Ca(2+)(out). It catalyses the reaction 3',5'-cyclic AMP(in) = 3',5'-cyclic AMP(out). With respect to regulation, basal activity is enhanced by binding to bitter tastants, such as flufenamic acid and aristolochic acid. Regulated by cholesterol in a concentration-dependent manner. In terms of biological role, gustducin-linked G-protein coupled receptor that plays a role in the perception of bitterness. The activity of this receptor stimulates GNAT3, activating the gustducin G-protein pathway. Likely plays a role in sensing the chemical composition of the gastrointestinal content and other extra-oral tissues via the inhibitory G-protein pathways. This is Taste receptor type 2 member 14 (TAS2R14) from Macaca mulatta (Rhesus macaque).